Here is a 525-residue protein sequence, read N- to C-terminus: Hydroxyneurosporene desaturase (525 aa).

Belongs to the carotenoid/retinoid oxidoreductase family.

The enzyme catalyses rhodopin + A = (3E)-3,4-didehydrorhodopin + AH2. It functions in the pathway carotenoid biosynthesis; spheroidene biosynthesis. In terms of biological role, catalyzes the introduction of C-3,4 double bonds into 1-hydroxyneurosporene (1-HO-Neu) to yield demethylspheroidene (DMS). The preferred substrates are 1-hydroxy-neurosporene, 1-hydroxy-lycopene and 1,1-dihydroxyneurosporene, however the 3,4-didehydrolycopene derivatives such as 1,1-dihydroxy-3,4-didehydrolycopene, 1-methoxy-1-hydroxy-3,4-didehydrolycopene and 1-hydroxy-3,4-didehydrolycopene are also efficiently converted. 1-HO-carotene derivatives can be also used. This is Hydroxyneurosporene desaturase (crtD) from Rubrivivax gelatinosus (Rhodocyclus gelatinosus).